We begin with the raw amino-acid sequence, 229 residues long: Large ribosomal subunit protein uL1 (229 aa).

The protein belongs to the universal ribosomal protein uL1 family. As to quaternary structure, part of the 50S ribosomal subunit.

Functionally, binds directly to 23S rRNA. The L1 stalk is quite mobile in the ribosome, and is involved in E site tRNA release. Protein L1 is also a translational repressor protein, it controls the translation of the L11 operon by binding to its mRNA. This Bifidobacterium animalis subsp. lactis (strain AD011) protein is Large ribosomal subunit protein uL1.